The primary structure comprises 349 residues: MSTIITIPRSVSWKGDAIAVLNQTKLPHVTEYKTLTNIEDVWKSIIMLEVRGAPAIGIVAAFGLALAAKKYDAINIYEFQKKFNRDCNYLGTSRPTAVNLFWAIDRMRESIREITTIKEAQKILEEEALHIQQEDEMVCRSIGEHALTCFKDGDKILTICNAGSIATARYGTALAPFYIGKEKGVRLHAYACETRPVLQGGRLTTWELKQADIDVTLITDNTAAHAIRTKEINAIIVGADRIVENGDTANKIGTLNLAILAKYFGIPFYVAAPLSTFDTTKQTGAEIVIEERDETEVTKIFGKQVAPLGTPVFNPAFDVTPHELITGIITEKGILRGDYKQEITSLFEK.

Residues 51–53, R94, and Q199 contribute to the substrate site; that span reads RGA. The Proton donor role is filled by D240. 250-251 lines the substrate pocket; sequence NK.

This sequence belongs to the EIF-2B alpha/beta/delta subunits family. MtnA subfamily. Homodimer.

The enzyme catalyses 5-(methylsulfanyl)-alpha-D-ribose 1-phosphate = 5-(methylsulfanyl)-D-ribulose 1-phosphate. It participates in amino-acid biosynthesis; L-methionine biosynthesis via salvage pathway; L-methionine from S-methyl-5-thio-alpha-D-ribose 1-phosphate: step 1/6. Functionally, catalyzes the interconversion of methylthioribose-1-phosphate (MTR-1-P) into methylthioribulose-1-phosphate (MTRu-1-P). The polypeptide is Methylthioribose-1-phosphate isomerase (Bacillus mycoides (strain KBAB4) (Bacillus weihenstephanensis)).